Reading from the N-terminus, the 200-residue chain is MEHRGTSPLLLALALLSALCWRARALPPRGAAFPAVPRLGNRLPFDAASESDRAHGSLKSESDILQNTLPENEKFYFDLSRIIDRNDRHADGIFTTVYSHLLAKLAVKRYLHSLIRKRVSSQDSPVKRHSDAVFTDNYSRFRKQMAVKKYLNSVLTGKRSQEELNPAKLADEAEILEPSFSENYDDVSVDELLSHLPLDL.

The signal sequence occupies residues 1-25 (MEHRGTSPLLLALALLSALCWRARA). 2 consecutive propeptides follow at residues 26 to 87 (LPPR…DRND) and 119 to 126 (VSSQDSPV). At Thr-156 the chain carries Threonine amide. The propeptide occupies 160 to 200 (SQEELNPAKLADEAEILEPSFSENYDDVSVDELLSHLPLDL).

Belongs to the glucagon family.

It is found in the secreted. In terms of biological role, VIP is a neuropeptide involved in a diverse array of physiological processes through activating the PACAP subfamily of class B1 G protein-coupled receptors: VIP receptor 1 (VPR1) and VIP receptor 2 (VPR2). Abundantly expressed throughout the CNS and peripheral nervous systems where they primarily exert neuroprotective and immune modulatory roles. Also causes vasodilation, lowers arterial blood pressure, stimulates myocardial contractility, increases glycogenolysis and relaxes the smooth muscle of trachea, stomach and gall bladder. PHM-27 is a bioactive form from proteolysis of the same precursor protein, that causes vasodilation. The chain is VIP peptides (VIP) from Meleagris gallopavo (Wild turkey).